Consider the following 476-residue polypeptide: Glycogen synthase (476 aa).

ADP-alpha-D-glucose is bound at residue Lys15.

Belongs to the glycosyltransferase 1 family. Bacterial/plant glycogen synthase subfamily.

The enzyme catalyses [(1-&gt;4)-alpha-D-glucosyl](n) + ADP-alpha-D-glucose = [(1-&gt;4)-alpha-D-glucosyl](n+1) + ADP + H(+). It participates in glycan biosynthesis; glycogen biosynthesis. Synthesizes alpha-1,4-glucan chains using ADP-glucose. The sequence is that of Glycogen synthase (glgA) from Haemophilus influenzae (strain ATCC 51907 / DSM 11121 / KW20 / Rd).